Reading from the N-terminus, the 491-residue chain is Cobyric acid synthase (491 aa).

The region spanning Asp-250 to Trp-441 is the GATase cobBQ-type domain. Catalysis depends on Cys-331, which acts as the Nucleophile. Residue His-433 is part of the active site.

Belongs to the CobB/CobQ family. CobQ subfamily.

It participates in cofactor biosynthesis; adenosylcobalamin biosynthesis. Functionally, catalyzes amidations at positions B, D, E, and G on adenosylcobyrinic A,C-diamide. NH(2) groups are provided by glutamine, and one molecule of ATP is hydrogenolyzed for each amidation. In Trichormus variabilis (strain ATCC 29413 / PCC 7937) (Anabaena variabilis), this protein is Cobyric acid synthase.